Consider the following 91-residue polypeptide: Large ribosomal subunit protein eL43 (91 aa).

The segment at 39-60 (CSFCGKDAVRRSSVGIWKCNGC) adopts a C4-type zinc-finger fold.

The protein belongs to the eukaryotic ribosomal protein eL43 family.

This Dictyostelium discoideum (Social amoeba) protein is Large ribosomal subunit protein eL43 (rpl37A).